Consider the following 130-residue polypeptide: Small ribosomal subunit protein uS8 (130 aa).

It belongs to the universal ribosomal protein uS8 family.

The polypeptide is Small ribosomal subunit protein uS8 (RPS15A) (Paracentrotus lividus (Common sea urchin)).